The following is a 390-amino-acid chain: Glutamate 5-kinase (390 aa).

Residue K29 coordinates ATP. The substrate site is built by S69, D156, and N168. T188–D189 is a binding site for ATP. A PUA domain is found at S295–N374.

The protein belongs to the glutamate 5-kinase family.

The protein localises to the cytoplasm. It catalyses the reaction L-glutamate + ATP = L-glutamyl 5-phosphate + ADP. It participates in amino-acid biosynthesis; L-proline biosynthesis; L-glutamate 5-semialdehyde from L-glutamate: step 1/2. Catalyzes the transfer of a phosphate group to glutamate to form L-glutamate 5-phosphate. This chain is Glutamate 5-kinase, found in Psychrobacter cryohalolentis (strain ATCC BAA-1226 / DSM 17306 / VKM B-2378 / K5).